The chain runs to 957 residues: Outer kinetochore KNL1 complex subunit knl-1 (957 aa).

Residues methionine 87–threonine 90 form repeat 1. The segment at methionine 87–threonine 393 is 8 X 4 AA repeats of M-[D/E]-[I/L/M]-[S/T]. A disordered region spans residues isoleucine 89 to methionine 111. The span at glycine 91 to asparagine 106 shows a compositional bias: polar residues. Repeat copies occupy residues methionine 109–serine 112, methionine 206–threonine 209, methionine 251–threonine 254, methionine 282–threonine 285, methionine 326–threonine 329, methionine 367–threonine 370, and methionine 390–threonine 393. Positions serine 476–serine 504 are disordered. The stretch at lysine 830–arginine 950 forms a coiled coil.

Component of the KNL1 complex composed of knl-1 and kbp-5. Part of the ten-subunit outer kinetochore KMN network that includes the KNL1, MIS12 and NDC80 complexes. Interacts with the protein phosphatase 1 (PP1) catalytic subunit gsp-1; the interaction is direct. Interacts with the protein phosphatase 1 (PP1) catalytic subunit gsp-2; the interaction is direct. Interacts with the MIS12 complex subunits kbp-1, kbp-2 and mis-12. Interacts with the NDC80 complex components ndc-80 and him-10. Interacts with knl-3. Interacts with kbp-3. Interacts with kbp-4. Interacts with kbp-5.

The protein resides in the cytoplasm. It localises to the cell cortex. The protein localises to the chromosome. Its subcellular location is the centromere. It is found in the kinetochore. Its function is as follows. Acts as a component of the outer kinetochore KNL1 complex that serves as a docking point for spindle assembly checkpoint components and mediates microtubule-kinetochore interactions. Kinetochores, consisting of a centromere-associated inner segment and a microtubule-contacting outer segment, play a crucial role in chromosome segregation by mediating the physical connection between centromeric DNA and spindle microtubules. The outer kinetochore is made up of the ten-subunit KMN network, comprising the MIS12, NDC80 and KNL1 complexes, and auxiliary microtubule-associated components; together they connect the outer kinetochore with the inner kinetochore, bind microtubules, and mediate interactions with mitotic checkpoint proteins that delay anaphase until chromosomes are bioriented on the spindle. Binds the protein phosphatase 1 catalytic subunits gsp-1 and gsp-2, which has a role in delaying formation of load-bearing kinetochore-microtubule attachments. Required for the recruitment of spindle-assembly checkpoint components bub-1 and mdf-1/2 to unattached kinetochores. Binds microtubules which plays a role in silencing of the spindle assembly checkpoint, but not the formation of load-bearing microtubule-kinetochore attachments. Has a role in the correct localization of the spindly-like protein spdl-1 and the RZZ complex that is composed of rod-1, czw-1 and zwl-1 to kinetochores. This is Outer kinetochore KNL1 complex subunit knl-1 from Caenorhabditis briggsae.